A 117-amino-acid polypeptide reads, in one-letter code: Non-specific lipid-transfer protein (117 aa).

Positions 1–26 (MASSAFVKFTCALVMCMMVAAPLAEA) are cleaved as a signal peptide. Disulfide bonds link cysteine 29-cysteine 76, cysteine 39-cysteine 53, cysteine 54-cysteine 99, and cysteine 74-cysteine 113.

It belongs to the plant LTP family.

Its function is as follows. Plant non-specific lipid-transfer proteins transfer phospholipids as well as galactolipids across membranes. May play a role in wax or cutin deposition in the cell walls of expanding epidermal cells and certain secretory tissues. Also has fungicide activity. The chain is Non-specific lipid-transfer protein (IWF1') from Beta vulgaris (Sugar beet).